Reading from the N-terminus, the 292-residue chain is Protein LicB (292 aa).

2 EamA domains span residues 70–139 (ALSG…LLAI) and 160–286 (LGWS…VTLY).

This chain is Protein LicB (licB), found in Haemophilus influenzae (strain ATCC 51907 / DSM 11121 / KW20 / Rd).